Reading from the N-terminus, the 305-residue chain is Exosome complex component RRP45 (305 aa).

Belongs to the RNase PH family. In terms of assembly, component of the RNA exosome complex. Specifically part of the catalytically inactive RNA exosome core complex (Exo-9) which may associate with the catalytic subunits RRP6 and DIS3 in cytoplasmic- and nuclear-specific RNA exosome complex forms. Exo-9 is formed by a hexameric base ring of RNase PH domain-containing subunits and a cap ring consisting of CSL4, RRP4 and RRP40. Interacts with LRP1.

Its subcellular location is the cytoplasm. The protein localises to the nucleus. The protein resides in the nucleolus. Non-catalytic component of the RNA exosome complex which has 3'-&gt;5' exoribonuclease activity and participates in a multitude of cellular RNA processing and degradation events. In the nucleus, the RNA exosome complex is involved in proper maturation of stable RNA species such as rRNA, snRNA and snoRNA, in the elimination of RNA processing by-products and non-coding 'pervasive' transcripts, such as antisense RNA species and cryptic unstable transcripts (CUTs), and of mRNAs with processing defects, thereby limiting or excluding their export to the cytoplasm. In the cytoplasm, the RNA exosome complex is involved in general mRNA turnover and in RNA surveillance pathways, preventing translation of aberrant mRNAs. The catalytic inactive RNA exosome core complex of 9 subunits (Exo-9) is proposed to play a pivotal role in the binding and presentation of RNA for ribonucleolysis, and to serve as a scaffold for the association with catalytic subunits and accessory proteins or complexes. RRP45 is part of the hexameric ring of RNase PH domain-containing subunits proposed to form a central channel which threads RNA substrates for degradation. The polypeptide is Exosome complex component RRP45 (RRP45) (Saccharomyces cerevisiae (strain ATCC 204508 / S288c) (Baker's yeast)).